We begin with the raw amino-acid sequence, 209 residues long: Octanoyltransferase (209 aa).

The 181-residue stretch at 29–209 (GSGDELVWML…KKSFVKIFGE (181 aa)) folds into the BPL/LPL catalytic domain. Residues 68 to 75 (RGGKYTYH), 141 to 143 (AIG), and 154 to 156 (GIA) each bind substrate. The Acyl-thioester intermediate role is filled by cysteine 172.

Belongs to the LipB family.

It is found in the cytoplasm. The catalysed reaction is octanoyl-[ACP] + L-lysyl-[protein] = N(6)-octanoyl-L-lysyl-[protein] + holo-[ACP] + H(+). Its pathway is protein modification; protein lipoylation via endogenous pathway; protein N(6)-(lipoyl)lysine from octanoyl-[acyl-carrier-protein]: step 1/2. In terms of biological role, catalyzes the transfer of endogenously produced octanoic acid from octanoyl-acyl-carrier-protein onto the lipoyl domains of lipoate-dependent enzymes. Lipoyl-ACP can also act as a substrate although octanoyl-ACP is likely to be the physiological substrate. The polypeptide is Octanoyltransferase (Neorickettsia sennetsu (strain ATCC VR-367 / Miyayama) (Ehrlichia sennetsu)).